Consider the following 237-residue polypeptide: MARRPTPPGTPETTGVGHVVDLVRASIPPLHPAGLPFVAVPLAVAVAAGKRKWVRRAGLATAAACAGFFRHPNRVPPNRPGVVVAPADGEIALVDTASPPAELGLGDQPLPRVSIFLSVLDVHVQRTPVSGVVREVRHQSGQFRSADLPEASAVNERNSMLLETQSGQQIVVVQIAGLLARRIVCDARVGDVLTIGDTYGLIRFGSRVDTYFPVGTELLVQPGQRTIGGETVLATLS.

Serine 206 functions as the Schiff-base intermediate with substrate; via pyruvic acid in the catalytic mechanism. At serine 206 the chain carries Pyruvic acid (Ser); by autocatalysis.

Belongs to the phosphatidylserine decarboxylase family. PSD-A subfamily. As to quaternary structure, heterodimer of a large membrane-associated beta subunit and a small pyruvoyl-containing alpha subunit. It depends on pyruvate as a cofactor. In terms of processing, is synthesized initially as an inactive proenzyme. Formation of the active enzyme involves a self-maturation process in which the active site pyruvoyl group is generated from an internal serine residue via an autocatalytic post-translational modification. Two non-identical subunits are generated from the proenzyme in this reaction, and the pyruvate is formed at the N-terminus of the alpha chain, which is derived from the carboxyl end of the proenzyme. The post-translation cleavage follows an unusual pathway, termed non-hydrolytic serinolysis, in which the side chain hydroxyl group of the serine supplies its oxygen atom to form the C-terminus of the beta chain, while the remainder of the serine residue undergoes an oxidative deamination to produce ammonia and the pyruvoyl prosthetic group on the alpha chain.

It localises to the cell membrane. It carries out the reaction a 1,2-diacyl-sn-glycero-3-phospho-L-serine + H(+) = a 1,2-diacyl-sn-glycero-3-phosphoethanolamine + CO2. Its pathway is phospholipid metabolism; phosphatidylethanolamine biosynthesis; phosphatidylethanolamine from CDP-diacylglycerol: step 2/2. Catalyzes the formation of phosphatidylethanolamine (PtdEtn) from phosphatidylserine (PtdSer). The polypeptide is Phosphatidylserine decarboxylase proenzyme (Nocardia farcinica (strain IFM 10152)).